Consider the following 448-residue polypeptide: Exoglucanase GH7B (448 aa).

The N-terminal stretch at 1 to 17 (MSLAVVFLLGFLAVSHG) is a signal peptide. Residue glutamine 18 is modified to Pyrrolidone carboxylic acid. 2 disulfide bridges follow: cysteine 62-cysteine 83 and cysteine 73-cysteine 79. Substrate-binding positions include tyrosine 97, 119-120 (DI), and lysine 197. Disulfide bonds link cysteine 154-cysteine 415, cysteine 188-cysteine 226, cysteine 192-cysteine 225, cysteine 246-cysteine 271, cysteine 254-cysteine 259, and cysteine 276-cysteine 350. The active-site Nucleophile is glutamate 228. Residues 230–233 (DIWE) and histidine 244 contribute to the substrate site. Glutamate 233 functions as the Proton donor/acceptor in the catalytic mechanism. Arginine 266 and aspartate 274 together coordinate substrate. Substrate-binding residues include tryptophan 396 and arginine 412.

The protein belongs to the glycosyl hydrolase 7 (cellulase C) family. In terms of assembly, monomer. Highly expressed in the hepatopancreas (at protein level). Little or no expression detected in the hindgut or the rest of the body (at protein level).

The protein resides in the secreted. The enzyme catalyses Hydrolysis of (1-&gt;4)-beta-D-glucosidic linkages in cellulose and cellotetraose, releasing cellobiose from the non-reducing ends of the chains.. Exocellobiohydrolase (CBH) that catalyzes the hydrolysis of 1,4-beta-D-glucosidic bonds in cellulose to release the disaccharide cellobiose. The degradation of cellulose involves an interplay between different cellulolytic enzymes. Hydrolysis starts with endoglucanases (EGs), which cut internal beta-1,4-glucosidic bonds in cellulose to reduce the polymerization degree of the substrate and create new chain ends for exocellobiohydrolases (CBHs). The CBHs release the disaccharide cellobiose from the non-reducing end of the cellulose polymer chain. Finally, beta-1,4-glucosidases hydrolyze the cellobiose and other short cello-oligosaccharides into glucose units. The chain is Exoglucanase GH7B from Limnoria quadripunctata (Gribble).